Consider the following 364-residue polypeptide: Chorismate synthase (364 aa).

Arg-48 contributes to the NADP(+) binding site. FMN is bound by residues 131–133, 243–244, Gly-288, 303–307, and Arg-329; these read RSS, NA, and KPTSS.

It belongs to the chorismate synthase family. In terms of assembly, homotetramer. FMNH2 serves as cofactor.

It carries out the reaction 5-O-(1-carboxyvinyl)-3-phosphoshikimate = chorismate + phosphate. Its pathway is metabolic intermediate biosynthesis; chorismate biosynthesis; chorismate from D-erythrose 4-phosphate and phosphoenolpyruvate: step 7/7. In terms of biological role, catalyzes the anti-1,4-elimination of the C-3 phosphate and the C-6 proR hydrogen from 5-enolpyruvylshikimate-3-phosphate (EPSP) to yield chorismate, which is the branch point compound that serves as the starting substrate for the three terminal pathways of aromatic amino acid biosynthesis. This reaction introduces a second double bond into the aromatic ring system. This chain is Chorismate synthase, found in Brucella melitensis biotype 2 (strain ATCC 23457).